A 524-amino-acid polypeptide reads, in one-letter code: Cytochrome P450 monooxygenase ankB (524 aa).

Residues phenylalanine 22–phenylalanine 42 form a helical membrane-spanning segment. Position 466 (cysteine 466) interacts with heme.

This sequence belongs to the cytochrome P450 family. The cofactor is heme.

It is found in the membrane. It carries out the reaction cyclo(L-arginyl-tyrosyl) + reduced [NADPH--hemoprotein reductase] + O2 = cyclo(L-arginyl-L-dehydrotyrosyl) + oxidized [NADPH--hemoprotein reductase] + 2 H2O + H(+). The protein operates within alkaloid biosynthesis. Cytochrome P450 monooxygenase; part of the ank cluster that mediates the biosynthesis of NK13650 C, a highly modified cyclo-arginine-tyrosine dipeptide. AnkB is responsible for desaturation of the ankA product cyclo-Arg-Tyr diketopiperazine, likely through hydroxylation of the benzylic position followed by dehydration to yield a dehydro-cyclodipeptide. Within the pathway, the cyclodipeptide synthase ankA acts as the scaffold-generating enzyme and is responsible for formation of the cyclo-Arg-Tyr diketopiperazine (cRY) from L-Arg and L-Tyr. The ankA product cRY is desaturated by the cytochrome P450 monooxygenase ankB to yield a dehydro-cyclodipeptide intermediate. The FAD-dependent monooxygenase ankC then installs the m-OH, ankD catalyzes the attachment of L-homoserine, and ankE ligates citrate to the ankD product to yield NK13650 B. The O-methyltransferase ankF is responsible for methylation of the C-17 phenol group of NK13650 B to produce NK13650 D. Amidation of NK13650 D with L-Asp by ankG then leads to the production of NK13650 C, whereas amidation of NK13650 B produces NK13650 A. The chain is Cytochrome P450 monooxygenase ankB from Aspergillus thermomutatus (Neosartorya pseudofischeri).